The following is a 118-amino-acid chain: Large ribosomal subunit protein bL17 (118 aa).

The protein belongs to the bacterial ribosomal protein bL17 family. As to quaternary structure, part of the 50S ribosomal subunit. Contacts protein L32.

This Campylobacter concisus (strain 13826) protein is Large ribosomal subunit protein bL17.